The chain runs to 540 residues: Growth factor receptor-bound protein 14 (540 aa).

Residues 1–23 (MTTSLQDGQSAAGRAAARDSPLA) form a disordered region. T2 is modified (N-acetylthreonine). A Ras-associating domain is found at 106 to 192 (KKQVIKVYSE…NKLYFRKNYA (87 aa)). Positions 234-342 (YPEIHGFLHA…WVTAIRLLKY (109 aa)) constitute a PH domain. Residues S372 and S375 each carry the phosphoserine modification. An SH2 domain is found at 439–535 (WFHHKMSREE…VLPCKLKHYC (97 aa)).

The protein belongs to the GRB7/10/14 family. In terms of assembly, interacts with the cytoplasmic domain of the autophosphorylated insulin receptor, through the SH2 domain. Interacts with GRB14 (via BPS domain); this interaction protects the tyrosines in the activation loop on INSR from dephosphorylation. Binds to the ankyrin repeat region of TNKS2 via its N-terminus. Interacts with activated NRAS. Interacts (via SH2 domain) with TEK/TIE2 (tyrosine phosphorylated). Phosphorylated on serine residues. Phosphorylated on tyrosine residues by TEK/TIE2.

It localises to the cytoplasm. The protein resides in the endosome membrane. Functionally, adapter protein which modulates coupling of cell surface receptor kinases with specific signaling pathways. Binds to, and suppresses signals from, the activated insulin receptor (INSR). Potent inhibitor of insulin-stimulated MAPK3 phosphorylation. Plays a critical role regulating PDPK1 membrane translocation in response to insulin stimulation and serves as an adapter protein to recruit PDPK1 to activated insulin receptor, thus promoting PKB/AKT1 phosphorylation and transduction of the insulin signal. In Bos taurus (Bovine), this protein is Growth factor receptor-bound protein 14 (GRB14).